A 227-amino-acid chain; its full sequence is Cytochrome c oxidase subunit 2 (227 aa).

The Mitochondrial intermembrane portion of the chain corresponds to 1–14 (MAHAAQVGLQDATS). A helical membrane pass occupies residues 15-45 (PIMEELIIFHDHALMIIFLICFLVLYALFLT). Topologically, residues 46 to 59 (LTTKLTNTSISDAQ) are mitochondrial matrix. The chain crosses the membrane as a helical span at residues 60 to 87 (EMETVWTILPAIILVLIALPSLRILYMT). Residues 88–227 (DEVNDPSFTI…IFEMGPVFTL (140 aa)) are Mitochondrial intermembrane-facing. Cu cation-binding residues include histidine 161, cysteine 196, glutamate 198, cysteine 200, histidine 204, and methionine 207. Glutamate 198 is a binding site for Mg(2+).

This sequence belongs to the cytochrome c oxidase subunit 2 family. Component of the cytochrome c oxidase (complex IV, CIV), a multisubunit enzyme composed of 14 subunits. The complex is composed of a catalytic core of 3 subunits MT-CO1, MT-CO2 and MT-CO3, encoded in the mitochondrial DNA, and 11 supernumerary subunits COX4I, COX5A, COX5B, COX6A, COX6B, COX6C, COX7A, COX7B, COX7C, COX8 and NDUFA4, which are encoded in the nuclear genome. The complex exists as a monomer or a dimer and forms supercomplexes (SCs) in the inner mitochondrial membrane with NADH-ubiquinone oxidoreductase (complex I, CI) and ubiquinol-cytochrome c oxidoreductase (cytochrome b-c1 complex, complex III, CIII), resulting in different assemblies (supercomplex SCI(1)III(2)IV(1) and megacomplex MCI(2)III(2)IV(2)). Found in a complex with TMEM177, COA6, COX18, COX20, SCO1 and SCO2. Interacts with TMEM177 in a COX20-dependent manner. Interacts with COX20. Interacts with COX16. Cu cation is required as a cofactor.

The protein localises to the mitochondrion inner membrane. The enzyme catalyses 4 Fe(II)-[cytochrome c] + O2 + 8 H(+)(in) = 4 Fe(III)-[cytochrome c] + 2 H2O + 4 H(+)(out). Its function is as follows. Component of the cytochrome c oxidase, the last enzyme in the mitochondrial electron transport chain which drives oxidative phosphorylation. The respiratory chain contains 3 multisubunit complexes succinate dehydrogenase (complex II, CII), ubiquinol-cytochrome c oxidoreductase (cytochrome b-c1 complex, complex III, CIII) and cytochrome c oxidase (complex IV, CIV), that cooperate to transfer electrons derived from NADH and succinate to molecular oxygen, creating an electrochemical gradient over the inner membrane that drives transmembrane transport and the ATP synthase. Cytochrome c oxidase is the component of the respiratory chain that catalyzes the reduction of oxygen to water. Electrons originating from reduced cytochrome c in the intermembrane space (IMS) are transferred via the dinuclear copper A center (CU(A)) of subunit 2 and heme A of subunit 1 to the active site in subunit 1, a binuclear center (BNC) formed by heme A3 and copper B (CU(B)). The BNC reduces molecular oxygen to 2 water molecules using 4 electrons from cytochrome c in the IMS and 4 protons from the mitochondrial matrix. In Pan troglodytes (Chimpanzee), this protein is Cytochrome c oxidase subunit 2 (MT-CO2).